The primary structure comprises 247 residues: ATP synthase subunit a, chloroplastic (247 aa).

The next 5 membrane-spanning stretches (helical) occupy residues 38–58, 95–115, 134–154, 199–219, and 220–240; these read QVLI…IIAV, VPFI…GALL, INTT…AGLS, LVVV…VMFL, and GLFT…AYIG.

This sequence belongs to the ATPase A chain family. In terms of assembly, F-type ATPases have 2 components, CF(1) - the catalytic core - and CF(0) - the membrane proton channel. CF(1) has five subunits: alpha(3), beta(3), gamma(1), delta(1), epsilon(1). CF(0) has four main subunits: a, b, b' and c.

It localises to the plastid. It is found in the chloroplast thylakoid membrane. Functionally, key component of the proton channel; it plays a direct role in the translocation of protons across the membrane. The protein is ATP synthase subunit a, chloroplastic of Cucumis sativus (Cucumber).